Reading from the N-terminus, the 621-residue chain is MDGNVFPDQEQLLAFLKKLKEVFDVCDEDADGYIRVEHFVDLGLQFGQGDEVKKFAKYLDPNAHGRINFKDFCHGVFAIKGCEEILKSALGTPTIAAQPYQTDNGYYYQHQEGSLGPPIIVCTRPYPECQLYSDEEGMGGRDMQESDMDSAADSGAGSESSEGGRQDDKEEGLGGFFLRGNNCGQMVSSAAASVISVEEQFEDYGEGEDVDFTPSSPIPDDDTRTNGFSDLGSSLPSSAGQTPQKIRHLYNSELLDVYCSQCCKKVNLLNDLEARLKNLKANSPNRKISSTAFGRQLFHHSNFSSSQGSTEDLFRDSIDSCDVDITEKVSYLEKKISELENDSLANGDLKSKLKQENTQLVHRVHELEEQIKDQETRAEQCLEEELKRHREAYSKMERDKSTEIELLSNRVQQLEEENAEMKVNVCRLKSQTEKLDQEKQRMTDKLEDTSLRLKDEMDLYRKMMDKLWQNRHEFQKEREAMQELIEDLRRELEHLQLFKLETEKPGRGRTAAGLSEYNAKTREIELEHEVKRLKQENHKLRDQNDDLNGQILSLSLYEAKNLFACHTKAQSLAAEIDNASRDELVDALKEQEEINFRLRQYMDKIILAILDHNPSILEIKH.

EF-hand domains follow at residues 14-49 (AFLK…FGQG) and 47-82 (GQGD…IKGC). Positions 27, 29, 31, 33, 38, 60, 62, 66, and 71 each coordinate Ca(2+). Disordered stretches follow at residues 132–172 (YSDE…KEEG) and 203–243 (DYGE…GQTP). Residues 151-161 (AADSGAGSESS) show a composition bias toward low complexity. A compositionally biased stretch (basic and acidic residues) spans 162–172 (EGGRQDDKEEG). Positions 225 to 243 (TNGFSDLGSSLPSSAGQTP) are enriched in polar residues. Residues 348–556 (DLKSKLKQEN…LNGQILSLSL (209 aa)) adopt a coiled-coil conformation. The FIP-RBD domain occupies 558-620 (EAKNLFACHT…DHNPSILEIK (63 aa)).

Homodimer. Forms a complex with Rab11 (rab11a or rab11b) and arf6. As to expression, isoform 1 is predominantly expressed in neural tissues. Isoform B is expressed ubiquitously. In the developing retina, it is expressed in progenitors throughout the retina at early stages and becomes restricted to the ganglion cell layer and ciliary marginal zone as differentiation proceeds.

It is found in the recycling endosome membrane. The protein resides in the cleavage furrow. Its subcellular location is the midbody. The protein localises to the cytoplasmic vesicle. Its function is as follows. Acts as a regulator of endocytic traffic by participating in membrane delivery. Required for the abscission step in cytokinesis, possibly by acting as an 'address tag' delivering recycling endosome membranes to the cleavage furrow during late cytokinesis. May play a role in differentiation during retinal development. The polypeptide is Rab11 family-interacting protein 4A (rab11fip4a) (Danio rerio (Zebrafish)).